The following is a 156-amino-acid chain: Small ribosomal subunit protein uS7 (156 aa).

This sequence belongs to the universal ribosomal protein uS7 family. Part of the 30S ribosomal subunit. Contacts proteins S9 and S11.

Functionally, one of the primary rRNA binding proteins, it binds directly to 16S rRNA where it nucleates assembly of the head domain of the 30S subunit. Is located at the subunit interface close to the decoding center, probably blocks exit of the E-site tRNA. The polypeptide is Small ribosomal subunit protein uS7 (Bordetella petrii (strain ATCC BAA-461 / DSM 12804 / CCUG 43448)).